Consider the following 301-residue polypeptide: UDP-3-O-acyl-N-acetylglucosamine deacetylase (301 aa).

3 residues coordinate Zn(2+): histidine 75, histidine 233, and aspartate 237. The active-site Proton donor is histidine 260.

Belongs to the LpxC family. It depends on Zn(2+) as a cofactor.

The enzyme catalyses a UDP-3-O-[(3R)-3-hydroxyacyl]-N-acetyl-alpha-D-glucosamine + H2O = a UDP-3-O-[(3R)-3-hydroxyacyl]-alpha-D-glucosamine + acetate. It functions in the pathway glycolipid biosynthesis; lipid IV(A) biosynthesis; lipid IV(A) from (3R)-3-hydroxytetradecanoyl-[acyl-carrier-protein] and UDP-N-acetyl-alpha-D-glucosamine: step 2/6. Catalyzes the hydrolysis of UDP-3-O-myristoyl-N-acetylglucosamine to form UDP-3-O-myristoylglucosamine and acetate, the committed step in lipid A biosynthesis. In Aliarcobacter butzleri (strain RM4018) (Arcobacter butzleri), this protein is UDP-3-O-acyl-N-acetylglucosamine deacetylase.